A 432-amino-acid polypeptide reads, in one-letter code: MRRYAVMSSVSLQDFDAERIGLFHEDIKRKFDELKSKNLKLDLTRGKPSSEQLDFADELLALPGKGDFKAADGTDVRNYGGLDGIVDIRQIWADLLGVPVEQVLAGDASSLNIMFDVISWSYIFGNNDSVQPWSKEETVKWICPVPGYDRHFSITERFGFEMISVPMNEDGPDMDAVEELVKNPQVKGMWVVPVFSNPTGFTVTEDVAKRLSAMETAAPDFRVVWDNAYAVHTLTDEFPEVIDIVGLGEAAGNPNRFWAFTSTSKITLAGAGVSFFLTSAENRKWYTGHAGIRGIGPNKVNQLAHARYFGDAEGVRAVMRKHAASLAPKFNKVLEILDSRLAEYGVAQWTVPAGGYFISLDVVPGTASRVAELAKEAGIALTGAGSSYPLRQDPENKNLRLAPSLPPVEELEVAMDGVATCVLLAAAEHYAN.

45-46 (RG) lines the substrate pocket. A pyridoxal 5'-phosphate-binding site is contributed by 109–111 (SSL). A substrate-binding site is contributed by 148 to 150 (YDR). Pyridoxal 5'-phosphate is bound by residues asparagine 197, tyrosine 229, and 262–265 (STSK). Arginine 400 is a substrate binding site.

The protein belongs to the class-I pyridoxal-phosphate-dependent aminotransferase family. As to quaternary structure, homodimer. Pyridoxal 5'-phosphate is required as a cofactor.

The catalysed reaction is L-aspartate + 2-oxoglutarate = oxaloacetate + L-glutamate. The polypeptide is Aspartate aminotransferase (Corynebacterium glutamicum (strain ATCC 13032 / DSM 20300 / JCM 1318 / BCRC 11384 / CCUG 27702 / LMG 3730 / NBRC 12168 / NCIMB 10025 / NRRL B-2784 / 534)).